A 263-amino-acid polypeptide reads, in one-letter code: Interleukin-22 receptor subunit alpha-2 (263 aa).

The signal sequence occupies residues 1-21 (MMPKHCFLGFLISFFLTGVAG). 3 Fibronectin type-III domains span residues 26 to 68 (HESL…KIMF), 100 to 161 (GQRQ…TKID), and 162 to 263 (PPVM…VEIP). N-linked (GlcNAc...) asparagine glycosylation is present at asparagine 56. The cysteines at positions 110 and 118 are disulfide-linked. N-linked (GlcNAc...) asparagine glycosylation is found at asparagine 166, asparagine 171, asparagine 192, and asparagine 209. Cysteine 238 and cysteine 259 are disulfide-bonded.

The protein belongs to the type II cytokine receptor family. As to expression, expressed in placenta, spleen, breast, skin and lung. Also detected in intestinal tract, testis, brain, heart and thymus. No expression found in prostate, bladder, kidney, ovary, muscle, bone marrow, liver and uterus. Isoform 1 is expressed only in placenta. Isoform 2 is expressed in placenta and breast and at lower level in spleen, skin, thymus and stomach.

It localises to the secreted. Isoform 2 is a receptor for IL22. Binds to IL22, prevents interaction with the functional IL-22R complex and blocks the activity of IL22 (in vitro). May play an important role as an IL22 antagonist in the regulation of inflammatory responses. Functionally, isoform 1 may play a role in establishing and maintaining successful pregnancy. The protein is Interleukin-22 receptor subunit alpha-2 (IL22RA2) of Homo sapiens (Human).